Here is a 480-residue protein sequence, read N- to C-terminus: Ribulose bisphosphate carboxylase large chain (480 aa).

Positions 1–2 (MS) are excised as a propeptide. Residue P3 is modified to N-acetylproline. K14 is subject to N6,N6,N6-trimethyllysine. Residues N123 and T173 each coordinate substrate. The active-site Proton acceptor is K175. K177 serves as a coordination point for substrate. The Mg(2+) site is built by K201, D203, and E204. Residue K201 is modified to N6-carboxylysine. H294 serves as the catalytic Proton acceptor. Positions 295, 327, and 379 each coordinate substrate.

The protein belongs to the RuBisCO large chain family. Type I subfamily. As to quaternary structure, heterohexadecamer of 8 large chains and 8 small chains; disulfide-linked. The disulfide link is formed within the large subunit homodimers. Mg(2+) serves as cofactor. Post-translationally, the disulfide bond which can form in the large chain dimeric partners within the hexadecamer appears to be associated with oxidative stress and protein turnover.

Its subcellular location is the plastid. The protein resides in the chloroplast. The enzyme catalyses 2 (2R)-3-phosphoglycerate + 2 H(+) = D-ribulose 1,5-bisphosphate + CO2 + H2O. It carries out the reaction D-ribulose 1,5-bisphosphate + O2 = 2-phosphoglycolate + (2R)-3-phosphoglycerate + 2 H(+). Functionally, ruBisCO catalyzes two reactions: the carboxylation of D-ribulose 1,5-bisphosphate, the primary event in carbon dioxide fixation, as well as the oxidative fragmentation of the pentose substrate in the photorespiration process. Both reactions occur simultaneously and in competition at the same active site. This Acorus calamus var. americanus (American sweet flag) protein is Ribulose bisphosphate carboxylase large chain.